Consider the following 99-residue polypeptide: Malonate decarboxylase acyl carrier protein (99 aa).

S25 carries the O-(phosphoribosyl dephospho-coenzyme A)serine modification.

Belongs to the MdcC family. Covalently binds the prosthetic group of malonate decarboxylase.

Its subcellular location is the cytoplasm. Subunit of malonate decarboxylase, it is an acyl carrier protein to which acetyl and malonyl thioester residues are bound via a 2'-(5''-phosphoribosyl)-3'-dephospho-CoA prosthetic group and turn over during the catalytic mechanism. The chain is Malonate decarboxylase acyl carrier protein from Pseudomonas paraeruginosa (strain DSM 24068 / PA7) (Pseudomonas aeruginosa (strain PA7)).